The following is a 219-amino-acid chain: Ribose-5-phosphate isomerase A (219 aa).

Residues 28–31, 81–84, and 94–97 contribute to the substrate site; these read TGST, DSAD, and KGGG. E103 functions as the Proton acceptor in the catalytic mechanism. K121 contributes to the substrate binding site.

The protein belongs to the ribose 5-phosphate isomerase family. Homodimer.

It carries out the reaction aldehydo-D-ribose 5-phosphate = D-ribulose 5-phosphate. It functions in the pathway carbohydrate degradation; pentose phosphate pathway; D-ribose 5-phosphate from D-ribulose 5-phosphate (non-oxidative stage): step 1/1. Its function is as follows. Catalyzes the reversible conversion of ribose-5-phosphate to ribulose 5-phosphate. The polypeptide is Ribose-5-phosphate isomerase A (Buchnera aphidicola subsp. Schizaphis graminum (strain Sg)).